Here is a 72-residue protein sequence, read N- to C-terminus: Translation initiation factor IF-1 (72 aa).

The 72-residue stretch at 1-72 (MAKEDVIEVE…TRGRITYRYK (72 aa)) folds into the S1-like domain. A Phosphotyrosine modification is found at Tyr-60.

The protein belongs to the IF-1 family. As to quaternary structure, component of the 30S ribosomal translation pre-initiation complex which assembles on the 30S ribosome in the order IF-2 and IF-3, IF-1 and N-formylmethionyl-tRNA(fMet); mRNA recruitment can occur at any time during PIC assembly.

It localises to the cytoplasm. Its function is as follows. One of the essential components for the initiation of protein synthesis. Stabilizes the binding of IF-2 and IF-3 on the 30S subunit to which N-formylmethionyl-tRNA(fMet) subsequently binds. Helps modulate mRNA selection, yielding the 30S pre-initiation complex (PIC). Upon addition of the 50S ribosomal subunit IF-1, IF-2 and IF-3 are released leaving the mature 70S translation initiation complex. The sequence is that of Translation initiation factor IF-1 from Shouchella clausii (strain KSM-K16) (Alkalihalobacillus clausii).